The chain runs to 228 residues: 7-cyano-7-deazaguanine synthase (228 aa).

Position 11 to 21 (11 to 21 (LSGGLDSATCL)) interacts with ATP. Residues cysteine 191, cysteine 201, cysteine 204, and cysteine 207 each contribute to the Zn(2+) site.

It belongs to the QueC family. The cofactor is Zn(2+).

The catalysed reaction is 7-carboxy-7-deazaguanine + NH4(+) + ATP = 7-cyano-7-deazaguanine + ADP + phosphate + H2O + H(+). It functions in the pathway purine metabolism; 7-cyano-7-deazaguanine biosynthesis. Catalyzes the ATP-dependent conversion of 7-carboxy-7-deazaguanine (CDG) to 7-cyano-7-deazaguanine (preQ(0)). This is 7-cyano-7-deazaguanine synthase from Azoarcus sp. (strain BH72).